A 274-amino-acid polypeptide reads, in one-letter code: Putative ABC transporter ATP-binding protein alr3946 (274 aa).

An ABC transporter domain is found at 6 to 242; sequence LTFEQVYYTY…REILDSIELG (237 aa). Position 40–47 (40–47) interacts with ATP; it reads GRNGCGKT.

This sequence belongs to the ABC transporter superfamily.

The protein localises to the cell inner membrane. Its function is as follows. Probably part of an ABC transporter complex. Responsible for energy coupling to the transport system. This chain is Putative ABC transporter ATP-binding protein alr3946, found in Nostoc sp. (strain PCC 7120 / SAG 25.82 / UTEX 2576).